Consider the following 199-residue polypeptide: dITP/XTP pyrophosphatase (199 aa).

7-12 provides a ligand contact to substrate; the sequence is TTNLHK. Mg(2+) is bound by residues Glu-41 and Asp-70. The active-site Proton acceptor is Asp-70. Substrate is bound by residues Ser-71, 154-157, Lys-177, and 182-183; these read FGYD and HR.

This sequence belongs to the HAM1 NTPase family. As to quaternary structure, homodimer. Mg(2+) serves as cofactor.

It carries out the reaction XTP + H2O = XMP + diphosphate + H(+). It catalyses the reaction dITP + H2O = dIMP + diphosphate + H(+). The catalysed reaction is ITP + H2O = IMP + diphosphate + H(+). Its function is as follows. Pyrophosphatase that catalyzes the hydrolysis of nucleoside triphosphates to their monophosphate derivatives, with a high preference for the non-canonical purine nucleotides XTP (xanthosine triphosphate), dITP (deoxyinosine triphosphate) and ITP. Seems to function as a house-cleaning enzyme that removes non-canonical purine nucleotides from the nucleotide pool, thus preventing their incorporation into DNA/RNA and avoiding chromosomal lesions. The sequence is that of dITP/XTP pyrophosphatase from Protochlamydia amoebophila (strain UWE25).